Consider the following 343-residue polypeptide: MSAFTPASEVLLRHSDDFEQSRILFAGDLQDDLPARLDTAASRAHTQQFHHWQVLSRQMGDNARFSLVATADDVADCDTLIYYWPKNKPEAQFQLMNLLSLLPVGTDIFVVGENRSGVRSAEQMLADYAPLNKVDSARRCGLYFGRLEKQPVFDAEKFWGEYSVDGLTVKTLPGVFSRDGLDVGSQLLLSTLTPHTKGKVLDVGCGAGVLSVAFARHSPKIRLTLCDVSAPAVEASRATLAANGVEGEVFASNVFSEVKGRFDMIISNPPFHDGMQTSLDAAQTLIRGAVRHLNSGGELRIVANAFLPYPDVLDETFGFHEVIAQTGRFKVYRAIMTRQAKKG.

The protein belongs to the methyltransferase superfamily. RsmC family. As to quaternary structure, monomer.

Its subcellular location is the cytoplasm. The enzyme catalyses guanosine(1207) in 16S rRNA + S-adenosyl-L-methionine = N(2)-methylguanosine(1207) in 16S rRNA + S-adenosyl-L-homocysteine + H(+). Its function is as follows. Specifically methylates the guanine in position 1207 of 16S rRNA in the 30S particle. The polypeptide is Ribosomal RNA small subunit methyltransferase C (Escherichia coli (strain K12 / DH10B)).